The sequence spans 41 residues: Chymotrypsin inhibitor (41 aa).

In terms of biological role, inhibits chymotrypsin. This is Chymotrypsin inhibitor from Eisenia hortensis (European nightcrawler).